The primary structure comprises 196 residues: dITP/XTP pyrophosphatase (196 aa).

Position 10 to 15 (10 to 15 (TTNPHK)) interacts with substrate. Catalysis depends on Asp-68, which acts as the Proton acceptor. Asp-68 is a binding site for Mg(2+). Residues Ser-69, 148–151 (FGYD), and 175–176 (HR) each bind substrate.

The protein belongs to the HAM1 NTPase family. As to quaternary structure, homodimer. Requires Mg(2+) as cofactor.

It carries out the reaction XTP + H2O = XMP + diphosphate + H(+). The catalysed reaction is dITP + H2O = dIMP + diphosphate + H(+). The enzyme catalyses ITP + H2O = IMP + diphosphate + H(+). Functionally, pyrophosphatase that catalyzes the hydrolysis of nucleoside triphosphates to their monophosphate derivatives, with a high preference for the non-canonical purine nucleotides XTP (xanthosine triphosphate), dITP (deoxyinosine triphosphate) and ITP. Seems to function as a house-cleaning enzyme that removes non-canonical purine nucleotides from the nucleotide pool, thus preventing their incorporation into DNA/RNA and avoiding chromosomal lesions. The chain is dITP/XTP pyrophosphatase from Thermotoga maritima (strain ATCC 43589 / DSM 3109 / JCM 10099 / NBRC 100826 / MSB8).